A 4485-amino-acid polypeptide reads, in one-letter code: Dynein gamma chain, flagellar outer arm (4485 aa).

The segment at Met1–Glu1780 is stem. Coiled-coil stretches lie at residues Ile449–Lys469, Val804–Tyr838, Val1093–Ile1114, Asp1275–Leu1297, and Lys1699–Thr1727. 4 AAA regions span residues Tyr1781 to Thr2002, Lys2061 to Lys2279, Thr2384 to Gly2638, and Lys2763 to Tyr3013. Residues Gly1819 to Thr1826, Gly2099 to Ser2106, Gly2425 to Thr2432, and Gly2802 to Gln2809 contribute to the ATP site. Coiled coils occupy residues Ala3077 to Gln3099, Glu3196 to Glu3227, Lys3265 to Glu3343, and Glu3569 to Arg3663. A stalk region spans residues Ala3077–Glu3343. 2 AAA regions span residues Leu3412–Glu3643 and Ala3857–Asn4071.

Belongs to the dynein heavy chain family. As to quaternary structure, consists of at least 3 heavy chains (alpha, beta and gamma), 2 intermediate chains and 8 light chains.

Its subcellular location is the cell projection. The protein localises to the cilium. It localises to the flagellum. The protein resides in the cytoplasm. It is found in the cytoskeleton. Its subcellular location is the flagellum axoneme. Functionally, force generating protein of eukaryotic cilia and flagella. Produces force towards the minus ends of microtubules. Dynein has ATPase activity; the force-producing power stroke is thought to occur on release of ADP. This is Dynein gamma chain, flagellar outer arm (ODA2) from Chlamydomonas reinhardtii (Chlamydomonas smithii).